The following is a 72-amino-acid chain: uncharacterized protein (72 aa).

2 consecutive transmembrane segments (helical) span residues 15-35 and 50-70; these read WEIL…IGSI and ILIY…MYFI.

The protein resides in the host membrane. This is an uncharacterized protein from Spiroplasma melliferum (SpV1).